Consider the following 1181-residue polypeptide: Putative primase (1181 aa).

Residues 1141-1181 form a disordered region; the sequence is RSHSTMVEHDMDDDESTNKKQELEEEDEECIDIDEYNNERF. Residues 1163–1181 show a composition bias toward acidic residues; it reads LEEEDEECIDIDEYNNERF.

It belongs to the eukaryotic-type primase small subunit family.

Functionally, synthesizes small RNA primers for the Okazaki fragments on both template strands at replication forks during viral DNA synthesis. This chain is Putative primase, found in Magallana gigas (Pacific oyster).